Here is a 776-residue protein sequence, read N- to C-terminus: Microtubule-associated protein tau (776 aa).

The segment covering 1 to 26 (MAEPRQEFEVMEDHAGTYGLGDRKDQ) has biased composition (basic and acidic residues). Disordered stretches follow at residues 1-263 (MAEP…PAKG) and 276-591 (STEI…LKNV). An N-acetylalanine modification is found at Ala2. Phosphotyrosine is present on residues Tyr18 and Tyr29. Lys44 is covalently cross-linked (Glycyl lysine isopeptide (Lys-Gly) (interchain with G-Cter in ubiquitin)). Ser46 and Ser61 each carry phosphoserine. The segment covering 61-71 (SETSDAKSTPT) has biased composition (polar residues). Phosphothreonine occurs at positions 69, 71, and 111. Composition is skewed to basic and acidic residues over residues 179 to 189 (EGGRHAPELLK) and 207 to 216 (GGKERPGSKE). Residue Ser214 is modified to Phosphoserine. A compositionally biased stretch (acidic residues) spans 217–228 (EVDEDRDVDESS). Over residues 314 to 323 (EQAHSEEHLG) the composition is skewed to basic and acidic residues. The span at 324-340 (RAAFPGAPGEGPEARGP) shows a compositional bias: low complexity. Composition is skewed to basic and acidic residues over residues 344 to 356 (EDTK…ESSE) and 381 to 393 (KSKD…DKKA). Positions 440-452 (KYVSSVTPRTGSS) are enriched in polar residues. A compositionally biased stretch (basic and acidic residues) spans 455 to 466 (KEMKLKGADGKT). Residue Thr470 is modified to Phosphothreonine. At Arg472 the chain carries Omega-N-methylarginine. Position 480 is an N6,N6-dimethyllysine; alternate (Lys480). At Lys480 the chain carries N6-acetyllysine; alternate. A phosphothreonine mark is found at Thr486, Thr492, and Thr498. 3 positions are modified to phosphoserine: Ser502, Ser526, and Ser530. Positions 517 to 528 (RSERGEPPKSGD) are enriched in basic and acidic residues. Low complexity predominate over residues 529–549 (RSGYSSPGSPGTPGSRSRTPS). Residue Tyr532 is modified to Phosphotyrosine. 3 positions are modified to phosphoserine: Ser533, Ser534, and Ser537. Thr540 and Thr547 each carry phosphothreonine. Ser549 bears the Phosphoserine mark. Thr552 carries the post-translational modification Phosphothreonine. Lys560 carries the N6-acetyllysine modification. Thr566 carries the post-translational modification Phosphothreonine. 2 positions are modified to phosphoserine: Ser570 and Ser572. Tau/MAP repeat units lie at residues 579 to 609 (QTAP…GGGK), 610 to 640 (VQII…GGGS), 641 to 671 (VQIV…GGGQ), and 672 to 703 (VEVK…GGGN). Residue Lys589 forms a Glycyl lysine isopeptide (Lys-Gly) (interchain with G-Cter in ubiquitin) linkage. The residue at position 594 (Lys594) is an N6-acetyllysine; alternate. Lys594 carries the post-translational modification N6-methyllysine; alternate. Lys594 participates in a covalent cross-link: Glycyl lysine isopeptide (Lys-Gly) (interchain with G-Cter in ubiquitin); alternate. Position 597 is a phosphoserine (Ser597). Lys602 participates in a covalent cross-link: Glycyl lysine isopeptide (Lys-Gly) (interchain with G-Cter in ubiquitin). At Lys616 the chain carries N6-acetyllysine; alternate. Lys616 participates in a covalent cross-link: Glycyl lysine isopeptide (Lys-Gly) (interchain with G-Cter in ubiquitin); alternate. A phosphoserine mark is found at Ser620 and Ser624. At Lys625 the chain carries N6-acetyllysine. The residue at position 628 (Ser628) is a Phosphoserine. N6-acetyllysine; alternate is present on Lys633. Lys633 participates in a covalent cross-link: Glycyl lysine isopeptide (Lys-Gly) (interchain with G-Cter in ubiquitin); alternate. The residue at position 640 (Ser640) is a Phosphoserine. Lys646 bears the N6,N6-dimethyllysine; alternate mark. N6-acetyllysine; alternate is present on residues Lys646, Lys652, and Lys656. Residues Lys646, Lys652, and Lys656 each participate in a glycyl lysine isopeptide (Lys-Gly) (interchain with G-Cter in ubiquitin); alternate cross-link. Ser659 is subject to Phosphoserine. Lys666, Lys678, and Lys682 each carry N6-acetyllysine; alternate. Glycyl lysine isopeptide (Lys-Gly) (interchain with G-Cter in ubiquitin); alternate cross-links involve residues Lys666, Lys678, and Lys682. Arg684 bears the Omega-N-methylarginine mark. Ser687 carries the phosphoserine modification. A Glycyl lysine isopeptide (Lys-Gly) (interchain with G-Cter in ubiquitin) cross-link involves residue Lys688. Ser691 is subject to Phosphoserine. Lys704 bears the N6-acetyllysine; alternate mark. A Glycyl lysine isopeptide (Lys-Gly) (interchain with G-Cter in ubiquitin); alternate cross-link involves residue Lys704. Lys710 is covalently cross-linked (Glycyl lysine isopeptide (Lys-Gly) (interchain with G-Cter in ubiquitin)). Lys720 is subject to N6-acetyllysine; alternate. Lys720 participates in a covalent cross-link: Glycyl lysine isopeptide (Lys-Gly) (interchain with G-Cter in ubiquitin); alternate. Tyr729 carries the phosphotyrosine modification. Phosphoserine occurs at positions 731 and 735. The segment at 733–752 (VVSGDTSPRHLSNVSSTGSI) is disordered. Over residues 736–751 (GDTSPRHLSNVSSTGS) the composition is skewed to polar residues. Thr738 bears the Phosphothreonine mark. A phosphoserine mark is found at Ser739, Ser744, Ser751, and Ser757. Thr762 carries the phosphothreonine modification.

Interacts with MARK1, MARK2, MARK3 and MARK4. Interacts with SQSTM1 when polyubiquitinated. Interacts with PSMC2 through SQSTM1. Interacts with FKBP4. Binds to CSNK1D. Interacts with SGK1. Interacts with EPM2A; the interaction dephosphorylates MAPT at Ser-396. Interacts with PIN1. Interacts with LRRK2. Interacts with LRP1, leading to endocytosis; this interaction is reduced in the presence of LRPAP1/RAP. Polyubiquitinated. Requires functional TRAF6 and may provoke SQSTM1-dependent degradation by the proteasome. In terms of processing, phosphorylation at various serine and threonine residues in S-P or T-P motifs by proline-directed protein kinases (PDPK1, CDK1, CDK5, GSK3, MAPK) (a few sites per protein in interphase, more in mitosis), and at serine residues in K-X-G-S motifs by MAP/microtubule affinity-regulating kinase (MARK1, MARK2, MARK3 or MARK4), causing detachment from microtubules, and their disassembly. Phosphorylation at Ser-597 by BRSK1 and BRSK2 in neurons affects ability to bind microtubules and plays a role in neuron polarization. Phosphorylation at Ser-214 by SGK1 mediates microtubule depolymerization and neurite formation in hippocampal neurons. Phosphorylated by PHK. Dephosphorylation at several serine and threonine residues by the serine/threonine phosphatase PPP5C.

It is found in the cytoplasm. Its subcellular location is the cytosol. It localises to the cell membrane. The protein localises to the cytoskeleton. The protein resides in the cell projection. It is found in the axon. Its subcellular location is the dendrite. Functionally, promotes microtubule assembly and stability, and might be involved in the establishment and maintenance of neuronal polarity. The C-terminus binds axonal microtubules while the N-terminus binds neural plasma membrane components, suggesting that tau functions as a linker protein between both. Axonal polarity is predetermined by tau localization (in the neuronal cell) in the domain of the cell body defined by the centrosome. The short isoforms allow plasticity of the cytoskeleton whereas the longer isoforms may preferentially play a role in its stabilization. This chain is Microtubule-associated protein tau (MAPT), found in Gorilla gorilla gorilla (Western lowland gorilla).